We begin with the raw amino-acid sequence, 157 residues long: Peptide methionine sulfoxide reductase MsrA (157 aa).

Cys-10 is a catalytic residue.

Belongs to the MsrA Met sulfoxide reductase family.

It catalyses the reaction L-methionyl-[protein] + [thioredoxin]-disulfide + H2O = L-methionyl-(S)-S-oxide-[protein] + [thioredoxin]-dithiol. The enzyme catalyses [thioredoxin]-disulfide + L-methionine + H2O = L-methionine (S)-S-oxide + [thioredoxin]-dithiol. Functionally, has an important function as a repair enzyme for proteins that have been inactivated by oxidation. Catalyzes the reversible oxidation-reduction of methionine sulfoxide in proteins to methionine. This is Peptide methionine sulfoxide reductase MsrA from Clostridium botulinum (strain Kyoto / Type A2).